Reading from the N-terminus, the 298-residue chain is Osmoprotective compounds uptake permease protein GgtD (298 aa).

The next 7 helical transmembrane spans lie at 26 to 46, 97 to 117, 126 to 146, 158 to 178, 207 to 227, 231 to 251, and 263 to 283; these read IHIA…GLFI, IAVP…YAFA, LLFI…LIPV, TFLG…IYLL, LIVP…FLWV, LLVA…TIQL, and YLLT…FFGL. The ABC transmembrane type-1 domain maps to 91–283; that stretch reads FLNSLTIAVP…IVPLMVFFGL (193 aa).

The protein belongs to the binding-protein-dependent transport system permease family. In terms of assembly, the complex is composed of two ATP-binding proteins (GgtA), two transmembrane proteins (GgtC and GgtD) and a solute-binding protein (GgtB).

It is found in the cell membrane. Its function is as follows. Part of the ABC transporter complex GgtABCD involved in the uptake of the osmoprotective compounds glucosylglycerol (GG), sucrose and trehalose. Responsible for the translocation of the substrate across the membrane. This Synechocystis sp. (strain ATCC 27184 / PCC 6803 / Kazusa) protein is Osmoprotective compounds uptake permease protein GgtD.